A 231-amino-acid chain; its full sequence is Uracil phosphoribosyltransferase (231 aa).

38 to 42 (KGLVR) provides a ligand contact to GTP. 5-phospho-alpha-D-ribose 1-diphosphate is bound by residues Arg87, Arg112, and 140–148 (DPMIATGST). Uracil is bound by residues Ile203 and 208-210 (GDA). 5-phospho-alpha-D-ribose 1-diphosphate is bound at residue Asp209.

This sequence belongs to the UPRTase family. Mg(2+) is required as a cofactor.

The enzyme catalyses UMP + diphosphate = 5-phospho-alpha-D-ribose 1-diphosphate + uracil. It functions in the pathway pyrimidine metabolism; UMP biosynthesis via salvage pathway; UMP from uracil: step 1/1. With respect to regulation, allosterically activated by GTP. In terms of biological role, catalyzes the conversion of uracil and 5-phospho-alpha-D-ribose 1-diphosphate (PRPP) to UMP and diphosphate. The sequence is that of Uracil phosphoribosyltransferase from Methanococcus maripaludis (strain C5 / ATCC BAA-1333).